A 338-amino-acid polypeptide reads, in one-letter code: Nicotinate-nucleotide--dimethylbenzimidazole phosphoribosyltransferase (338 aa).

Glu-305 functions as the Proton acceptor in the catalytic mechanism.

The protein belongs to the CobT family.

The enzyme catalyses 5,6-dimethylbenzimidazole + nicotinate beta-D-ribonucleotide = alpha-ribazole 5'-phosphate + nicotinate + H(+). Its pathway is nucleoside biosynthesis; alpha-ribazole biosynthesis; alpha-ribazole from 5,6-dimethylbenzimidazole: step 1/2. Catalyzes the synthesis of alpha-ribazole-5'-phosphate from nicotinate mononucleotide (NAMN) and 5,6-dimethylbenzimidazole (DMB). The polypeptide is Nicotinate-nucleotide--dimethylbenzimidazole phosphoribosyltransferase (Novosphingobium aromaticivorans (strain ATCC 700278 / DSM 12444 / CCUG 56034 / CIP 105152 / NBRC 16084 / F199)).